The chain runs to 201 residues: Recombination protein RecR (201 aa).

Residues 60-75 (CKTCGNIDTQNPCTVC) form a C4-type zinc finger. Residues 83–178 (AIIVVVADVA…KVTRLAHGVP (96 aa)) form the Toprim domain.

The protein belongs to the RecR family.

Its function is as follows. May play a role in DNA repair. It seems to be involved in an RecBC-independent recombinational process of DNA repair. It may act with RecF and RecO. The chain is Recombination protein RecR from Rhodopseudomonas palustris (strain BisA53).